The following is a 935-amino-acid chain: MHINGGPLASWICCVIGSIHLAHASTRPENGGTSGMQRKKENSVLGMEDTVPLRLIFSNEEDNQTTQGLLSTRVRAGSPQHQDQLTHVAQASFQIDAFGSSFILDVELNHDLLSSDYRERHVTQDGKTVEVKGGEHCYYQGQIRGKAKSFVALSTCNGLHGMFCDGNHTYLIEPGEKYNPNEDYQFHSVYKSKVLEFPLDELPSEFWALNDTSVRLSQQTRSQRKKRQTRRYPRNVEDETKYVELMIVNDHLMYKKHRLSVGHTNSYAKSVVNMADLIYKEQLNTRIVLVAMETWATDNKFSISENPLLTLKEFMKYRRDFIKDKSDAVHLFSGSQLRVAAVVLRILVEWCSLLKGGGVNEFGKPDVMAVTLAQSLAHNLGIFSDKKKLLSGECKCEDTWSGCIMGDIGYYLPSKFSVCNIEEYHEFLNNGGGACLFNKPLKLLDPPECGNGFVETGEECDCGTIAECAMEGEECCKKCTLTQDSECSDGLCCSNCKFNPKEMLCREAVNDCDIPETCTGNTSQCPANIHKLDGYSCESMQGLCFGGRCKTRDRQCKYIWGEKVSAADRYCYEKLNIEGTEKGNCGRNKETWIQCNKQDVLCGYLLCTNISNVPRLGELDGDVTSSSIVNQGKLYNCSGGHVKLDEDTDLGYVEDGTPCGTGMMCLEHRCLPIDSFNFSTCLGSTNKICSGHGVCSNEVRCICDRFWTGEDCSSYLHYDHIKPEGDNRDEGVISTNIIIGAIAGTILVLALVLGITAWGYKNYRRERQIPQGDYVKKPGDADSFYSDLPPGVSSNSASSSKKRSAILSHFQISACSIPHYSISQNISLFCRRSNGLSHSWSERIPDTKHVSDVCENGRPRSNSWQGNVTSSRKKLRGKRFRPRSNSTETLSPAKSPSSSTGSIASSRRYPYPMPPLPDEERKASKQSARLWETSI.

Positions 1 to 24 are cleaved as a signal peptide; it reads MHINGGPLASWICCVIGSIHLAHA. The propeptide occupies 25–227; that stretch reads STRPENGGTS…QQTRSQRKKR (203 aa). 2 N-linked (GlcNAc...) asparagine glycosylation sites follow: asparagine 167 and asparagine 210. Topologically, residues 228 to 736 are extracellular; sequence QTRRYPRNVE…NRDEGVISTN (509 aa). The region spanning 241 to 440 is the Peptidase M12B domain; that stretch reads KYVELMIVND…GGGACLFNKP (200 aa). Cystine bridges form between cysteine 351–cysteine 435, cysteine 394–cysteine 419, cysteine 396–cysteine 403, cysteine 449–cysteine 479, cysteine 460–cysteine 476, cysteine 462–cysteine 468, cysteine 475–cysteine 496, cysteine 487–cysteine 493, cysteine 492–cysteine 518, cysteine 505–cysteine 525, cysteine 512–cysteine 544, cysteine 537–cysteine 549, cysteine 556–cysteine 607, cysteine 571–cysteine 637, cysteine 585–cysteine 595, cysteine 602–cysteine 665, and cysteine 659–cysteine 670. The Disintegrin domain occupies 446–533; the sequence is PPECGNGFVE…QCPANIHKLD (88 aa). Residue asparagine 521 is glycosylated (N-linked (GlcNAc...) asparagine). N-linked (GlcNAc...) asparagine glycans are attached at residues asparagine 609 and asparagine 636. A glycan (N-linked (GlcNAc...) asparagine) is linked at asparagine 677. An EGF-like domain is found at 677–713; that stretch reads NFSTCLGSTNKICSGHGVCSNEVRCICDRFWTGEDCS. Intrachain disulfides connect cysteine 681-cysteine 695, cysteine 689-cysteine 701, and cysteine 703-cysteine 712. Residues 737–757 traverse the membrane as a helical segment; it reads IIIGAIAGTILVLALVLGITA. The Cytoplasmic segment spans residues 758-935; sequence WGYKNYRRER…QSARLWETSI (178 aa). The segment at 850-935 is disordered; it reads VSDVCENGRP…QSARLWETSI (86 aa). Positions 859–870 are enriched in polar residues; that stretch reads PRSNSWQGNVTS. Residues 871–882 are compositionally biased toward basic residues; sequence SRKKLRGKRFRP. Residues 891 to 906 are compositionally biased toward low complexity; it reads SPAKSPSSSTGSIASS.

In terms of processing, the precursor is cleaved by a furin endopeptidase. In terms of tissue distribution, low levels in adult tissues. Not detected in developing embryos.

The protein resides in the cell membrane. Its function is as follows. Probable ligand for integrin in the brain. This is a non catalytic metalloprotease-like protein. This chain is Disintegrin and metalloproteinase domain-containing protein 22 (adam22), found in Xenopus laevis (African clawed frog).